Consider the following 718-residue polypeptide: Ubiquitin homeostasis protein lub1 (718 aa).

7 WD repeats span residues 12–50 (GHKQ…WTPH), 54–98 (NHEG…PSYY), 101–139 (GHES…YVLK), 140–178 (GHQS…KSIL), 180–217 (HNDC…YELH), 218–257 (GHTS…QCIT), and 259–296 (PTTS…VAPT). The PFU domain maps to 353–448 (QWSQKENEWK…QGHSLESKKE (96 aa)). A PUL domain is found at 462-717 (TIFPVSQLLF…VDAEKQILSL (256 aa)).

In terms of assembly, interacts with cdc48.

Its subcellular location is the nucleus. The protein resides in the cytoplasm. In terms of biological role, acts as a negative regulator of vacuole-dependent ubiquitin degradation. This chain is Ubiquitin homeostasis protein lub1 (lub1), found in Schizosaccharomyces pombe (strain 972 / ATCC 24843) (Fission yeast).